Reading from the N-terminus, the 3332-residue chain is Nonribosomal peptide synthetase imqB (3332 aa).

The tract at residues 230 to 622 is adenylation 1; it reads FSEQVKAHPG…IGRKDTQVKV (393 aa). The Carrier 1 domain occupies 764–846; that stretch reads GRITPQEKLL…DMARCITRVD (83 aa). Residue Ser801 is modified to O-(pantetheine 4'-phosphoryl)serine. Residues 886–1314 are condensation 1; sequence DIYPCTPLQE…NCLTRKELHQ (429 aa). The adenylation 2 stretch occupies residues 1336–1740; the sequence is EVSNTRPTAP…GRKDRQLKVR (405 aa). Residues 1880–1954 form the Carrier 2 domain; that stretch reads AIATPKEEKL…EMAEKAAETG (75 aa). Ser1915 is subject to O-(pantetheine 4'-phosphoryl)serine. A condensation 2 region spans residues 1992–2402; it reads EDIYPCTPLQ…CLSEIDTQQI (411 aa). The segment at 2422-2819 is adenylation 3; it reads AQQAREHPAT…GRKDTQVKIR (398 aa). A Carrier 3 domain is found at 2963–3039; that stretch reads EVATNDEAAV…DLASRIGRVE (77 aa). Ser3000 is subject to O-(pantetheine 4'-phosphoryl)serine. The thioesterase (TE) domain stretch occupies residues 3058 to 3323; it reads SSNPTLIQGQ…ETTRHIRDFC (266 aa).

The protein belongs to the NRP synthetase family.

It participates in secondary metabolite biosynthesis. In terms of biological role, nonribosomal peptide synthetase; part of the gene cluster that mediates the biosynthesis of imizoquins A to D, tripeptide-derived alkaloids that serve a protective role against oxidative stress that are essential for normal germination. ImqB is a canonical three-module NRPS that assembles the tripeptide backbone of the imizoquins via condensation of Trp, Tyr, and Leu-derived precursors. N-methylation by imqF and phenol oxidation by imqC, followed by cyclization via the FAD-dependent oxidase imqH carry out the three-step transformation of L-tyrosine into tetrahydroisoquinoline. Importantly, this sequence requires the presence of a free amine in the tyrosine moiety, indicating that isoquinoline formation occurs prior to peptide bond formation. The imidazolidin-4-one ring of imizoquins could form following additional oxidation of the methyl-derived bridgehead carbon by imqH. Lastly, O-methylation by imqG and leucine hydroxylation by imqE complete biosynthesis of the imizoquins. This Aspergillus flavus (strain ATCC 200026 / FGSC A1120 / IAM 13836 / NRRL 3357 / JCM 12722 / SRRC 167) protein is Nonribosomal peptide synthetase imqB.